A 467-amino-acid chain; its full sequence is A-type ATP synthase subunit B (467 aa).

The segment at 95–114 (GKGQPRDHMPLPPPEDFRDV) is disordered.

Belongs to the ATPase alpha/beta chains family. Has multiple subunits with at least A(3), B(3), C, D, E, F, H, I and proteolipid K(x).

It localises to the cell membrane. Functionally, component of the A-type ATP synthase that produces ATP from ADP in the presence of a proton gradient across the membrane. The B chain is a regulatory subunit. The sequence is that of A-type ATP synthase subunit B from Pyrobaculum aerophilum (strain ATCC 51768 / DSM 7523 / JCM 9630 / CIP 104966 / NBRC 100827 / IM2).